Reading from the N-terminus, the 511-residue chain is MAFTSMVSTVPVLFFFFTLLLISANSSSLSHNIKVQEQDKDPFVGFNIGTDVSNLLSPTELVKFLQAQKVNHVRLYDADPELLKALAKTKVRVIISVPNNQLLAIGSSNSTAASWIGRNVVAYYPETLITAISVGDEVLTTVPSSAPLLLPAIESLYNALVASNLHTQIKVSTPHAASIMLDTFPPSQAYFNQTWHSIMVPLLQFLSKTGSPLMMNLYPYYVYMQNKGVVPLDNCLFEPLTPSKEMVDPNTLLHYTNVLDAMVDAAYVSMKNLNVSDVAVLVTESGWPSKGDSKEPYATIDNADTYNSNLIKHVFDRTGTPLHPEMTSSVYIYELFNEDLRAPPVSEASWGLFYGNSTPVYLLHVSGSGTFLANDTTNQTYCIAMDGVDAKTLQAALDWACGPGRSNCSEIQPGESCYQPNNVKGHASFAFNSYYQKEGRASGSCDFKGVAMITTTDPSHGSCIFPGSKKVGNRTQTVVNSTEVAAGEATSRSLSRGFCVTIMILVTFSIL.

Residues 1–28 (MAFTSMVSTVPVLFFFFTLLLISANSSS) form the signal peptide. N-linked (GlcNAc...) asparagine glycosylation is present at N109. The Proton donor role is filled by E137. N-linked (GlcNAc...) asparagine glycans are attached at residues N192 and N274. The active-site Nucleophile is the E284. Residues N374, N378, N407, N473, and N480 are each glycosylated (N-linked (GlcNAc...) asparagine). Cysteines 382 and 445 form a disulfide. Residue A485 is the site of GPI-anchor amidated alanine attachment. The propeptide at 486 to 511 (AGEATSRSLSRGFCVTIMILVTFSIL) is removed in mature form.

This sequence belongs to the glycosyl hydrolase 17 family. Contains two additional disulfide bonds.

Its subcellular location is the cell membrane. It catalyses the reaction Hydrolysis of (1-&gt;3)-beta-D-glucosidic linkages in (1-&gt;3)-beta-D-glucans.. The polypeptide is Glucan endo-1,3-beta-glucosidase 1 (Arabidopsis thaliana (Mouse-ear cress)).